The following is a 132-amino-acid chain: Agouti-signaling protein (132 aa).

Positions 1-22 (MDVTRLLLATLLVFLCFFTVYS) are cleaved as a signal peptide. N-linked (GlcNAc...) asparagine glycosylation occurs at Asn-39. Residues 61 to 87 (HISRKEAEKKRSSKKEASMKKVARPRT) are disordered. The segment covering 64 to 79 (RKEAEKKRSSKKEASM) has biased composition (basic and acidic residues). 5 cysteine pairs are disulfide-bonded: Cys-93–Cys-108, Cys-100–Cys-114, Cys-107–Cys-125, Cys-111–Cys-132, and Cys-116–Cys-123. The Agouti domain occupies 93–132 (CVATRDSCKPPAPACCDPCASCQCRFFRSACSCRVLSLNC).

Its subcellular location is the secreted. Involved in the regulation of melanogenesis. The binding of ASP to MC1R precludes alpha-MSH initiated signaling and thus blocks production of cAMP, leading to a down-regulation of eumelanogenesis (brown/black pigment) and thus increasing synthesis of pheomelanin (yellow/red pigment). The protein is Agouti-signaling protein (ASIP) of Colobus polykomos (Western black-and-white colobus monkey).